The primary structure comprises 122 residues: MIQMQSILEVADNSGAKKVMCIKVLGGSHHMVAKLGDVIVVSVKDAIPGGKVKKGDVYKGLIVRTKTGVVRPDGSTIKFDQNALVLLNKQDEPIGTRVFGPVTRELRAKKYVRIMSLAEEVL.

It belongs to the universal ribosomal protein uL14 family. Part of the 50S ribosomal subunit. Forms a cluster with proteins L3 and L19. In the 70S ribosome, L14 and L19 interact and together make contacts with the 16S rRNA in bridges B5 and B8.

In terms of biological role, binds to 23S rRNA. Forms part of two intersubunit bridges in the 70S ribosome. This is Large ribosomal subunit protein uL14 from Rickettsia rickettsii (strain Iowa).